The primary structure comprises 253 residues: Hydroxyacylglutathione hydrolase (253 aa).

Zn(2+) contacts are provided by histidine 54, histidine 56, aspartate 58, histidine 59, histidine 110, aspartate 127, and histidine 165.

It belongs to the metallo-beta-lactamase superfamily. Glyoxalase II family. In terms of assembly, monomer. It depends on Zn(2+) as a cofactor.

It catalyses the reaction an S-(2-hydroxyacyl)glutathione + H2O = a 2-hydroxy carboxylate + glutathione + H(+). It functions in the pathway secondary metabolite metabolism; methylglyoxal degradation; (R)-lactate from methylglyoxal: step 2/2. Functionally, thiolesterase that catalyzes the hydrolysis of S-D-lactoyl-glutathione to form glutathione and D-lactic acid. This chain is Hydroxyacylglutathione hydrolase, found in Idiomarina loihiensis (strain ATCC BAA-735 / DSM 15497 / L2-TR).